Reading from the N-terminus, the 58-residue chain is Cholecystokinins (58 aa).

Tyr52 carries the post-translational modification Sulfotyrosine. A Phenylalanine amide modification is found at Phe58.

This sequence belongs to the gastrin/cholecystokinin family. As to quaternary structure, binds to CCK-A receptors in the pancreas and CCK-B receptors in the brain. cholecystokinin 8 binds CCK-A receptors more potently than cholecystokinin 58, cholecystokinin 8 and cholecystokinin 58 bind CCK-B receptors with equal affinity. The precursor is cleaved by proteases to produce a number of active cholecystokinins. Post-translationally, cholecystokinin 58 occurs in both sulfated (CCK58(s)) and nonsulfated (CCK58(ns)) forms, which differ in their receptor-binding activities. CCK58(s) binds to the CCK-A receptor with high affinity, CCK58(ns) binds poorly to the CCK-A receptor. CCK58(s) and CCK58(ns) both bind the CCK-B receptor. In terms of processing, the precursor is cleaved by ACE, which removes the Gly-Arg-Arg peptide at the C-terminus, leading to mature hormone.

It is found in the secreted. Functionally, this peptide hormone induces gall bladder contraction and the release of pancreatic enzymes in the gut. Its function in the brain is not clear. Binding to CCK-A receptors stimulates amylase release from the pancreas, binding to CCK-B receptors stimulates gastric acid secretion. cholecystokinin 58 and cholecystokinin 8, but not cholecystokinin 58 desnonopeptide, stimulate amylase release from the pancreas. cholecystokinin 58, but not cholecystokinin 8, increases bile-pancreatic volume. This is Cholecystokinins from Canis lupus familiaris (Dog).